A 497-amino-acid chain; its full sequence is Bypass of stop codon protein 6 (497 aa).

Over 1-72 the chain is Lumenal; sequence MDASSVPPKV…KVKTYPLNYQ (72 aa). Phosphoserine is present on residues S37 and S41. N49 carries an N-linked (GlcNAc...) asparagine glycan. A helical transmembrane segment spans residues 73–93; the sequence is TVPLVKLQVIACLIMFVVFGM. The Cytoplasmic segment spans residues 94 to 144; it reads NDQTVGALLPTLIEYYHISRVDVSNVFIVQLCGYVMASLSKERLNKHFGMR. A helical transmembrane segment spans residues 145–165; it reads GGMLLAAGLCIVFLIILATAP. At 166–167 the chain is on the lumenal side; that stretch reads SS. A helical membrane pass occupies residues 168-188; that stretch reads FYVCMFCGLPLGLGIGILDST. Topologically, residues 189-205 are cytoplasmic; that stretch reads GNVLMGSLLVHKNELMG. The helical transmembrane segment at 206–226 threads the bilayer; that stretch reads IMHGLYGAAAMVTPPLVSYFV. The Lumenal portion of the chain corresponds to 227 to 232; sequence EWGHWS. The chain crosses the membrane as a helical span at residues 233–253; the sequence is LFFLIPLFFSIIGMIVIFPAF. At 254 to 300 the chain is on the cytoplasmic side; sequence KFETASKYDYLCSVENKESNNDVEEAGDNSLMESTKASPGFFELLRN. The helical transmembrane segment at 301-321 threads the bilayer; it reads PAIFLYSLYLFLYLGAEITTG. The Lumenal segment spans residues 322 to 340; sequence SWFFSYLLETKSSNKVAMS. The helical transmembrane segment at 341–361 threads the bilayer; that stretch reads YIAASFWTGLTVGRLCLGFVT. The Cytoplasmic portion of the chain corresponds to 362-373; sequence ERFFENEYKASK. A helical transmembrane segment spans residues 374-394; that stretch reads AYAFLTLSSYTLFVLVGLINS. The Lumenal portion of the chain corresponds to 395 to 397; it reads SSV. The helical transmembrane segment at 398–418 threads the bilayer; that stretch reads FYFVVLFFVVFCCGTFIGPLF. Over 419 to 439 the chain is Cytoplasmic; sequence PNASIVALQVLPKRLHVSGVG. Residues 440 to 460 form a helical membrane-spanning segment; sequence VAVAVGGCGGAAIPYLAGVIA. Topologically, residues 461–462 are lumenal; the sequence is HT. The chain crosses the membrane as a helical span at residues 463–483; the sequence is VGIQYIPLLCWIMVALFTLEW. Over 484 to 497 the chain is Cytoplasmic; the sequence is TLYPKFIKGHEEYF.

The protein belongs to the major facilitator superfamily.

It is found in the golgi apparatus. It localises to the cis-Golgi network membrane. In terms of biological role, probable transporter. This chain is Bypass of stop codon protein 6 (BSC6), found in Saccharomyces cerevisiae (strain ATCC 204508 / S288c) (Baker's yeast).